A 372-amino-acid polypeptide reads, in one-letter code: Probable dual-specificity RNA methyltransferase RlmN (372 aa).

Residues 1-20 (MTSLPLTPVNPDAPARRAAM) are disordered. Residue Glu112 is the Proton acceptor of the active site. The 240-residue stretch at 118–357 (YPDRVTVCLS…STTVRDTRGR (240 aa)) folds into the Radical SAM core domain. The cysteines at positions 125 and 363 are disulfide-linked. Positions 132, 136, and 139 each coordinate [4Fe-4S] cluster. Residues 187–188 (GE), Ser221, 244–246 (SLH), and Asn320 contribute to the S-adenosyl-L-methionine site. Catalysis depends on Cys363, which acts as the S-methylcysteine intermediate.

Belongs to the radical SAM superfamily. RlmN family. It depends on [4Fe-4S] cluster as a cofactor.

Its subcellular location is the cytoplasm. The catalysed reaction is adenosine(2503) in 23S rRNA + 2 reduced [2Fe-2S]-[ferredoxin] + 2 S-adenosyl-L-methionine = 2-methyladenosine(2503) in 23S rRNA + 5'-deoxyadenosine + L-methionine + 2 oxidized [2Fe-2S]-[ferredoxin] + S-adenosyl-L-homocysteine. It carries out the reaction adenosine(37) in tRNA + 2 reduced [2Fe-2S]-[ferredoxin] + 2 S-adenosyl-L-methionine = 2-methyladenosine(37) in tRNA + 5'-deoxyadenosine + L-methionine + 2 oxidized [2Fe-2S]-[ferredoxin] + S-adenosyl-L-homocysteine. Its function is as follows. Specifically methylates position 2 of adenine 2503 in 23S rRNA and position 2 of adenine 37 in tRNAs. The sequence is that of Probable dual-specificity RNA methyltransferase RlmN from Salinispora tropica (strain ATCC BAA-916 / DSM 44818 / JCM 13857 / NBRC 105044 / CNB-440).